Reading from the N-terminus, the 461-residue chain is Bifunctional enzyme LpxC/FabZ (461 aa).

The UDP-3-O-acyl-N-acetylglucosamine deacetylase stretch occupies residues 1-302; it reads MLKQKTLKDS…FARQMRKEIR (302 aa). His78, His260, and Asp264 together coordinate Zn(2+). The Proton donor role is filled by His287. Positions 303-461 are 3-hydroxyacyl-[acyl-carrier-protein] dehydratase; that stretch reads LHEIQAPTYD…EFMAQIVKNK (159 aa). His364 is an active-site residue.

This sequence in the N-terminal section; belongs to the LpxC family. The protein in the C-terminal section; belongs to the thioester dehydratase family. Requires Zn(2+) as cofactor.

The protein localises to the cytoplasm. The enzyme catalyses a UDP-3-O-[(3R)-3-hydroxyacyl]-N-acetyl-alpha-D-glucosamine + H2O = a UDP-3-O-[(3R)-3-hydroxyacyl]-alpha-D-glucosamine + acetate. The catalysed reaction is a (3R)-hydroxyacyl-[ACP] = a (2E)-enoyl-[ACP] + H2O. It participates in glycolipid biosynthesis; lipid IV(A) biosynthesis; lipid IV(A) from (3R)-3-hydroxytetradecanoyl-[acyl-carrier-protein] and UDP-N-acetyl-alpha-D-glucosamine: step 2/6. Its function is as follows. Catalyzes the hydrolysis of UDP-3-O-myristoyl-N-acetylglucosamine to form UDP-3-O-myristoylglucosamine and acetate, the committed step in lipid A biosynthesis. In terms of biological role, involved in unsaturated fatty acids biosynthesis. Catalyzes the dehydration of short chain beta-hydroxyacyl-ACPs and long chain saturated and unsaturated beta-hydroxyacyl-ACPs. This chain is Bifunctional enzyme LpxC/FabZ (lpxC/fabZ), found in Bacteroides thetaiotaomicron (strain ATCC 29148 / DSM 2079 / JCM 5827 / CCUG 10774 / NCTC 10582 / VPI-5482 / E50).